Here is a 128-residue protein sequence, read N- to C-terminus: MYDNLKSLGITNPEEIDRYSLRQEANNDILKIYFQKDKGEFFAKSVKFKYPRQRKTVVADGIGQGYKEVQEISPNLRYIIDELDQICQRDRSEVDLKRKILDDLRHLESVVTNKISEIEADLEKLTRK.

This sequence belongs to the UPF0325 family.

The protein is UPF0325 protein YaeH of Escherichia fergusonii (strain ATCC 35469 / DSM 13698 / CCUG 18766 / IAM 14443 / JCM 21226 / LMG 7866 / NBRC 102419 / NCTC 12128 / CDC 0568-73).